The following is a 282-amino-acid chain: NADPH-dependent 7-cyano-7-deazaguanine reductase (282 aa).

Substrate is bound at residue 88-90 (IES). 90–91 (SK) contacts NADPH. Residue Cys190 is the Thioimide intermediate of the active site. Asp197 (proton donor) is an active-site residue. Residue 229–230 (HE) coordinates substrate. 258-259 (RG) provides a ligand contact to NADPH.

Belongs to the GTP cyclohydrolase I family. QueF type 2 subfamily. Homodimer.

It is found in the cytoplasm. It carries out the reaction 7-aminomethyl-7-carbaguanine + 2 NADP(+) = 7-cyano-7-deazaguanine + 2 NADPH + 3 H(+). The protein operates within tRNA modification; tRNA-queuosine biosynthesis. Catalyzes the NADPH-dependent reduction of 7-cyano-7-deazaguanine (preQ0) to 7-aminomethyl-7-deazaguanine (preQ1). This Escherichia coli O157:H7 protein is NADPH-dependent 7-cyano-7-deazaguanine reductase.